Here is a 648-residue protein sequence, read N- to C-terminus: Solute carrier family 23 member 2 (648 aa).

Positions 1–21 (MMGIGKNTASKSVEAGGSTEG) are disordered. The Cytoplasmic segment spans residues 9 to 110 (ASKSVEAGGS…LCIFLGLQHY (102 aa)). S70 is modified (phosphoserine). A Phosphothreonine modification is found at T75. Phosphoserine is present on S78. T79 is subject to Phosphothreonine. S81 is subject to Phosphoserine. A helical transmembrane segment spans residues 111–131 (LTCFSGTIAVPFLLADAMCVG). Over 132–139 (DDQWATSQ) the chain is Extracellular. A helical transmembrane segment spans residues 140–160 (LIGTIFFCVGITTLLQTTFGC). Residue R161 is a topological domain, cytoplasmic. The helical transmembrane segment at 162 to 182 (LPLFQASAFAFLAPARAILSL) threads the bilayer. Over 183–216 (DKWKCNTTEITVANGTAELLEHIWHPRIQEIQGA) the chain is Extracellular. N-linked (GlcNAc...) asparagine glycans are attached at residues N188 and N196. The chain crosses the membrane as a helical span at residues 217 to 237 (IIMSSLIEVVIGLLGLPGALL). The Cytoplasmic segment spans residues 238-264 (RYIGPLTITPTVALIGLSGFQAAGERA). A helical membrane pass occupies residues 265 to 282 (GKHWGIAMLTIFLVLLFS). Residues 283–286 (QYAR) lie on the Extracellular side of the membrane. The helical intramembrane region spans 287–300 (NVKFPLPIYKSKKG). At 301 to 307 (WTAYKFQ) the chain is on the extracellular side. The helical transmembrane segment at 308–328 (LFKMFPIILAILVSWLLCFIF) threads the bilayer. At 329 to 369 (TVTDVFPSNSTDYGYYARTDARKGVLLVAPWFKVPYPFQWG) the chain is on the cytoplasmic side. The helical transmembrane segment at 370 to 390 (MPTVSAAGVIGMLSAVVASII) threads the bilayer. At 391-415 (ESIGDYYACARLSCAPPPPIHAINR) the chain is on the extracellular side. A helical membrane pass occupies residues 416–436 (GIFVEGLSCVLDGIFGTGNGS). The Cytoplasmic segment spans residues 437–459 (TSSSPNIGVLGITKVGSRRVIQY). Residues 460–480 (GAALMLGLGMVGKFSALFASL) traverse the membrane as a helical segment. Over 481–483 (PDP) the chain is Extracellular. The chain crosses the membrane as a helical span at residues 484–504 (VLGALFCTLFGMITAVGLSNL). At 505–514 (QFIDLNSSRN) the chain is on the cytoplasmic side. The chain crosses the membrane as a helical span at residues 515-535 (LFVLGFSIFFGLVLPSYLRQN). Over 536–545 (PLVTGITGID) the chain is Extracellular. The chain crosses the membrane as a helical span at residues 546-566 (QILNVLLTTAMFVGGCVAFIL). Over 567-648 (DNTIPGTPEE…SSDKDSQATV (82 aa)) the chain is Cytoplasmic. The residue at position 647 (T647) is a Phosphothreonine.

It belongs to the nucleobase:cation symporter-2 (NCS2) (TC 2.A.40) family. In terms of assembly, interacts with CLSTN3. Phosphorylated. As to expression, expressed in metabolically active and specialized tissues, including high expression in brain and adrenals. Detected in a wide range of tissues. Expression in kidney is almost undetectable.

The protein localises to the cell membrane. The enzyme catalyses L-ascorbate(out) + 2 Na(+)(out) = L-ascorbate(in) + 2 Na(+)(in). Functionally, sodium/ascorbate cotransporter. Mediates electrogenic uptake of vitamin C, with a stoichiometry of 2 Na(+) for each ascorbate. This chain is Solute carrier family 23 member 2 (Slc23a2), found in Mus musculus (Mouse).